An 89-amino-acid polypeptide reads, in one-letter code: Small ribosomal subunit protein uS15 (89 aa).

The protein belongs to the universal ribosomal protein uS15 family. In terms of assembly, part of the 30S ribosomal subunit. Forms a bridge to the 50S subunit in the 70S ribosome, contacting the 23S rRNA.

Functionally, one of the primary rRNA binding proteins, it binds directly to 16S rRNA where it helps nucleate assembly of the platform of the 30S subunit by binding and bridging several RNA helices of the 16S rRNA. Forms an intersubunit bridge (bridge B4) with the 23S rRNA of the 50S subunit in the ribosome. This Parvibaculum lavamentivorans (strain DS-1 / DSM 13023 / NCIMB 13966) protein is Small ribosomal subunit protein uS15.